We begin with the raw amino-acid sequence, 853 residues long: DNA mismatch repair protein MutS (853 aa).

614 to 621 (GPNMGGKS) is a binding site for ATP.

This sequence belongs to the DNA mismatch repair MutS family.

This protein is involved in the repair of mismatches in DNA. It is possible that it carries out the mismatch recognition step. This protein has a weak ATPase activity. The sequence is that of DNA mismatch repair protein MutS from Escherichia coli (strain 55989 / EAEC).